We begin with the raw amino-acid sequence, 128 residues long: Glycine cleavage system H protein (128 aa).

Residues 22-104 (TVLVGITDYA…YGEGWIFRLK (83 aa)) form the Lipoyl-binding domain. The residue at position 63 (Lys-63) is an N6-lipoyllysine.

Belongs to the GcvH family. The glycine cleavage system is composed of four proteins: P, T, L and H. Monomer. It depends on (R)-lipoate as a cofactor.

Functionally, the glycine cleavage system catalyzes the degradation of glycine. The H protein shuttles the methylamine group of glycine from the P protein to the T protein. In Thermus thermophilus (strain ATCC 27634 / DSM 579 / HB8), this protein is Glycine cleavage system H protein.